We begin with the raw amino-acid sequence, 150 residues long: Large ribosomal subunit protein bL9 (150 aa).

This sequence belongs to the bacterial ribosomal protein bL9 family.

In terms of biological role, binds to the 23S rRNA. The polypeptide is Large ribosomal subunit protein bL9 (Burkholderia pseudomallei (strain 668)).